A 183-amino-acid chain; its full sequence is Inner membrane-spanning protein YciB (183 aa).

Helical transmembrane passes span 10–30 (LVIF…GALI), 50–70 (MHLI…VFHD), 72–92 (AFIK…LAVS), 118–138 (VTWY…YVAF), and 148–168 (FKVF…VIYL).

Belongs to the YciB family.

The protein localises to the cell inner membrane. Plays a role in cell envelope biogenesis, maintenance of cell envelope integrity and membrane homeostasis. The polypeptide is Inner membrane-spanning protein YciB (Shewanella sediminis (strain HAW-EB3)).